We begin with the raw amino-acid sequence, 370 residues long: 3-isopropylmalate dehydrogenase (370 aa).

77-90 (GAKWDGVPYEARPE) lines the NAD(+) pocket. Residues R97, R107, R135, and D226 each coordinate substrate. Residues D226, D250, and D254 each coordinate Mg(2+). 290–302 (GSAPDIAGKGLAN) contacts NAD(+).

Belongs to the isocitrate and isopropylmalate dehydrogenases family. LeuB type 1 subfamily. Homodimer. Mg(2+) is required as a cofactor. It depends on Mn(2+) as a cofactor.

Its subcellular location is the cytoplasm. The catalysed reaction is (2R,3S)-3-isopropylmalate + NAD(+) = 4-methyl-2-oxopentanoate + CO2 + NADH. The protein operates within amino-acid biosynthesis; L-leucine biosynthesis; L-leucine from 3-methyl-2-oxobutanoate: step 3/4. Functionally, catalyzes the oxidation of 3-carboxy-2-hydroxy-4-methylpentanoate (3-isopropylmalate) to 3-carboxy-4-methyl-2-oxopentanoate. The product decarboxylates to 4-methyl-2 oxopentanoate. The chain is 3-isopropylmalate dehydrogenase from Rhodopseudomonas palustris (strain BisB18).